Reading from the N-terminus, the 901-residue chain is MENEYRLRFFEEEGLKRKRCKVCGSYFWTKGEHEVCGDSPCQEYEFFDVPTKVKLSLRDAKREFIKFFEEKGHVPVEPRPVVARWRDDLFLTIASIVVFQPHVTKGLVPPPANPLVIVQPCIRLEDIDNVGLTLGRHMTGFHMGGHHAFNYPDNWVYWKEETVKLAYEFFTERIGIPEELLNFKESWWEGGGNAGPSFEVTVAGLELATLVFMQYDVVEENGQKKYVPMKLKVVDTGYGIERIAWFTQKTPTAFHAVYGELLHEFHKRLGVEEPPDELLYELVRSAGLMDPERPETLERVYKRASEKLGMRVDEIREIHSRASLVYQVLDHTRTLMWMLADGIVPSNVGEGYLARLVIRRTLRALKKLKADVPLSELLELQINYWKDDYPRAWKNKDYILDVVEFEQKKFEETLKKGRNIVIRLIKKKKQITLDDLVELYDSHGIPPDIVSEIAKEMGVRVEVPHNFYSIVASRHQKTVHKVKGAEEKGKLPPEIIEWAKGFPPTRRLFHEDPYMKEFDAQVIGSNRNYVILDKTAFYPEGGGQAADTGVIASGDESYRVVDVQKVGDVIVHVLDRDYSGGKVVVGRIDWERRYRLMRHHTGTHLLLGALRKVLGDHVWQAGAEKTPEKARFDFTHHKPLTREEVRKIEEVANKVIDERRKIRAFTLPRNEAEARYWFSIYQGGVPMSKDIRLVEIEGWDVEACFGTHLSNTGEVGSLKIISTRKIQDGVVRVEFVAGTRVAEEAAKMEDLIREASEKLSTNPEMLVKRIDALQKELENVKKTVAEYRKRLVSEYLKAAKALDGIKYVKLDLRDPELVQEVLRALSSDSPAAVIVDGRVELAAPKGVDVGKAVREVVREVGCKGGGKGNRATVVCESEEKVVELLSKLAAKLTSQPSGRRG.

Residues histidine 600, histidine 604, cysteine 704, and histidine 708 each coordinate Zn(2+).

Belongs to the class-II aminoacyl-tRNA synthetase family. Requires Zn(2+) as cofactor.

Its subcellular location is the cytoplasm. The enzyme catalyses tRNA(Ala) + L-alanine + ATP = L-alanyl-tRNA(Ala) + AMP + diphosphate. Functionally, catalyzes the attachment of alanine to tRNA(Ala) in a two-step reaction: alanine is first activated by ATP to form Ala-AMP and then transferred to the acceptor end of tRNA(Ala). Also edits incorrectly charged Ser-tRNA(Ala) and Gly-tRNA(Ala) via its editing domain. This chain is Alanine--tRNA ligase, found in Ignicoccus hospitalis (strain KIN4/I / DSM 18386 / JCM 14125).